Here is a 266-residue protein sequence, read N- to C-terminus: UPF0328 protein ECU03_0130 (266 aa).

Belongs to the UPF0328 family.

In Encephalitozoon cuniculi (strain GB-M1) (Microsporidian parasite), this protein is UPF0328 protein ECU03_0130.